The sequence spans 156 residues: Arginine repressor (156 aa).

Belongs to the ArgR family.

The protein resides in the cytoplasm. It functions in the pathway amino-acid biosynthesis; L-arginine biosynthesis [regulation]. Functionally, regulates arginine biosynthesis genes. The protein is Arginine repressor of Shewanella sediminis (strain HAW-EB3).